Here is a 305-residue protein sequence, read N- to C-terminus: UDP-3-O-acyl-N-acetylglucosamine deacetylase (305 aa).

His-79, His-238, and Asp-242 together coordinate Zn(2+). The active-site Proton donor is the His-265.

Belongs to the LpxC family. Zn(2+) serves as cofactor.

It catalyses the reaction a UDP-3-O-[(3R)-3-hydroxyacyl]-N-acetyl-alpha-D-glucosamine + H2O = a UDP-3-O-[(3R)-3-hydroxyacyl]-alpha-D-glucosamine + acetate. It participates in glycolipid biosynthesis; lipid IV(A) biosynthesis; lipid IV(A) from (3R)-3-hydroxytetradecanoyl-[acyl-carrier-protein] and UDP-N-acetyl-alpha-D-glucosamine: step 2/6. Functionally, catalyzes the hydrolysis of UDP-3-O-myristoyl-N-acetylglucosamine to form UDP-3-O-myristoylglucosamine and acetate, the committed step in lipid A biosynthesis. The polypeptide is UDP-3-O-acyl-N-acetylglucosamine deacetylase (Haemophilus influenzae (strain PittGG)).